The following is a 157-amino-acid chain: Chromophore lyase CpcS/CpeS 1 (157 aa).

It belongs to the CpcS/CpeS biliprotein lyase family.

It is found in the plastid. The protein resides in the organellar chromatophore. Its function is as follows. Covalently attaches a chromophore to Cys residue(s) of phycobiliproteins. In Paulinella chromatophora, this protein is Chromophore lyase CpcS/CpeS 1.